Reading from the N-terminus, the 436-residue chain is Glucose-1-phosphate adenylyltransferase (436 aa).

Residues Tyr-112, Gly-178, 193-194 (EK), and Ser-211 contribute to the alpha-D-glucose 1-phosphate site.

This sequence belongs to the bacterial/plant glucose-1-phosphate adenylyltransferase family. As to quaternary structure, homotetramer.

The enzyme catalyses alpha-D-glucose 1-phosphate + ATP + H(+) = ADP-alpha-D-glucose + diphosphate. Its pathway is glycan biosynthesis; glycogen biosynthesis. Involved in the biosynthesis of ADP-glucose, a building block required for the elongation reactions to produce glycogen. Catalyzes the reaction between ATP and alpha-D-glucose 1-phosphate (G1P) to produce pyrophosphate and ADP-Glc. This chain is Glucose-1-phosphate adenylyltransferase, found in Histophilus somni (strain 129Pt) (Haemophilus somnus).